A 165-amino-acid polypeptide reads, in one-letter code: Large ribosomal subunit protein uL10 (165 aa).

It belongs to the universal ribosomal protein uL10 family. As to quaternary structure, part of the ribosomal stalk of the 50S ribosomal subunit. The N-terminus interacts with L11 and the large rRNA to form the base of the stalk. The C-terminus forms an elongated spine to which L12 dimers bind in a sequential fashion forming a multimeric L10(L12)X complex.

In terms of biological role, forms part of the ribosomal stalk, playing a central role in the interaction of the ribosome with GTP-bound translation factors. This chain is Large ribosomal subunit protein uL10, found in Shewanella pealeana (strain ATCC 700345 / ANG-SQ1).